The following is an 81-amino-acid chain: Conotoxin Cl9.6 (81 aa).

The N-terminal stretch at 1 to 20 (MSTLGMTLLILLLLLPLATP) is a signal peptide. A propeptide spanning residues 21–40 (DDVGQPPKRDTLRNLLKIGT) is cleaved from the precursor. 3 disulfides stabilise this stretch: Cys-46–Cys-69, Cys-54–Cys-76, and Cys-60–Cys-78.

As to expression, expressed by the venom duct.

Its subcellular location is the secreted. The chain is Conotoxin Cl9.6 from Californiconus californicus (California cone).